The following is a 296-amino-acid chain: Bifunctional protein FolD (296 aa).

NADP(+) contacts are provided by residues 166-168, serine 191, and isoleucine 232; that span reads GRS.

Belongs to the tetrahydrofolate dehydrogenase/cyclohydrolase family. Homodimer.

It catalyses the reaction (6R)-5,10-methylene-5,6,7,8-tetrahydrofolate + NADP(+) = (6R)-5,10-methenyltetrahydrofolate + NADPH. The catalysed reaction is (6R)-5,10-methenyltetrahydrofolate + H2O = (6R)-10-formyltetrahydrofolate + H(+). The protein operates within one-carbon metabolism; tetrahydrofolate interconversion. Functionally, catalyzes the oxidation of 5,10-methylenetetrahydrofolate to 5,10-methenyltetrahydrofolate and then the hydrolysis of 5,10-methenyltetrahydrofolate to 10-formyltetrahydrofolate. This Cereibacter sphaeroides (strain ATCC 17025 / ATH 2.4.3) (Rhodobacter sphaeroides) protein is Bifunctional protein FolD.